The following is a 219-amino-acid chain: Cytidylate kinase (219 aa).

21-29 (GPAASGKGT) serves as a coordination point for ATP.

This sequence belongs to the cytidylate kinase family. Type 1 subfamily.

It localises to the cytoplasm. It catalyses the reaction CMP + ATP = CDP + ADP. It carries out the reaction dCMP + ATP = dCDP + ADP. This Rickettsia akari (strain Hartford) protein is Cytidylate kinase.